The chain runs to 274 residues: HMP-PP phosphatase (274 aa).

The active-site Nucleophile is aspartate 8. Positions 8, 10, and 213 each coordinate Mg(2+).

It belongs to the HAD-like hydrolase superfamily. Cof family. Mg(2+) serves as cofactor.

It carries out the reaction 4-amino-2-methyl-5-(diphosphooxymethyl)pyrimidine + H2O = 4-amino-2-methyl-5-(phosphooxymethyl)pyrimidine + phosphate + H(+). Catalyzes the hydrolysis of 4-amino-2-methyl-5-hydroxymethylpyrimidine pyrophosphate (HMP-PP) to 4-amino-2-methyl-5-hydroxymethylpyrimidine phosphate (HMP-P). The polypeptide is HMP-PP phosphatase (Serratia proteamaculans (strain 568)).